Reading from the N-terminus, the 359-residue chain is DNA-directed RNA polymerase RPB3-11 homolog (359 aa).

The protein in the N-terminal section; belongs to the archaeal RpoD/eukaryotic RPB3 RNA polymerase subunit family. This sequence in the C-terminal section; belongs to the archaeal RpoL/eukaryotic RPB11/RPC19 RNA polymerase subunit family. Part of the viral DNA-directed RNA polymerase that consists of 8 polII-like subunits (RPB1, RPB2, RPB3, RPB5, RPB6, RPB7, RPB9, RPB10), a capping enzyme and a termination factor.

It is found in the host cytoplasm. Its subcellular location is the virion. Its function is as follows. Component of the DNA-directed RNA polymerase (RNAP) that catalyzes the transcription in the cytoplasm of viral DNA into RNA using the four ribonucleoside triphosphates as substrates. The polypeptide is DNA-directed RNA polymerase RPB3-11 homolog (Ornithodoros (relapsing fever ticks)).